A 289-amino-acid polypeptide reads, in one-letter code: Rhodopsin (289 aa).

The Extracellular portion of the chain corresponds to 1-7; that stretch reads YLVNPAA. A helical membrane pass occupies residues 8 to 32; sequence YAALGAYMFLLILIGFPINFLTLYV. The Cytoplasmic segment spans residues 33-44; that stretch reads TLEHKKLRTPLN. The chain crosses the membrane as a helical span at residues 45 to 67; it reads YILLNLAVANLFMVLGGFTTTMY. Residues 68-81 lie on the Extracellular side of the membrane; that stretch reads TSMHGYFVLGRLGC. A disulfide bridge links Cys81 with Cys158. The helical transmembrane segment at 82–104 threads the bilayer; it reads NLEAFFATLGGEIALWSLVVLAI. Positions 105 to 107 match the 'Ionic lock' involved in activated form stabilization motif; sequence ERW. Residues 105–123 are Cytoplasmic-facing; that stretch reads ERWIVVCKPISNFRFTEDH. A helical transmembrane segment spans residues 124 to 144; that stretch reads AIMGLAFTWVMALACAVPPLV. Over 145–173 the chain is Extracellular; it reads GWSRYIPEGMQCSCGVDYYTRAEGFNNES. Asn171 is a glycosylation site (N-linked (GlcNAc...) asparagine). A helical membrane pass occupies residues 174 to 195; that stretch reads FVIYMFIVHFLIPLSVIFFCYG. Topologically, residues 196–223 are cytoplasmic; that stretch reads RLLCAVKEAPAAQQESETTQRAEKEVSR. Residues 224–245 traverse the membrane as a helical segment; it reads MVVIMVIGFLVCWLPYASVAWW. The Extracellular portion of the chain corresponds to 246 to 257; sequence IFCNQGSDFGPI. The helical transmembrane segment at 258-279 threads the bilayer; it reads FMTLPSFFAKSAAIYNPMIYIC. Position 267 is an N6-(retinylidene)lysine (Lys267). The Cytoplasmic segment spans residues 280–289; it reads MNKQFRHCMI.

This sequence belongs to the G-protein coupled receptor 1 family. Opsin subfamily. Phosphorylated on some or all of the serine and threonine residues present in the C-terminal region. In terms of processing, contains one covalently linked retinal chromophore.

It localises to the membrane. Its subcellular location is the cell projection. The protein resides in the cilium. The protein localises to the photoreceptor outer segment. Photoreceptor required for image-forming vision at low light intensity. While most salt water fish species use retinal as chromophore, most freshwater fish use 3-dehydroretinal, or a mixture of retinal and 3-dehydroretinal. Light-induced isomerization of 11-cis to all-trans retinal triggers a conformational change that activates signaling via G-proteins. Subsequent receptor phosphorylation mediates displacement of the bound G-protein alpha subunit by arrestin and terminates signaling. This is Rhodopsin (rho) from Abyssocottus korotneffi (Baikalian deep-water sculpin).